A 58-amino-acid polypeptide reads, in one-letter code: Large ribosomal subunit protein bL32c (58 aa).

Residues 1–19 show a composition bias toward basic residues; sequence MAVPKKRKSKMKTRLRKAQ. Positions 1-25 are disordered; that stretch reads MAVPKKRKSKMKTRLRKAQWKSEAS.

Belongs to the bacterial ribosomal protein bL32 family.

Its subcellular location is the plastid. It is found in the chloroplast. This Chlorella vulgaris (Green alga) protein is Large ribosomal subunit protein bL32c (rpl32).